The chain runs to 349 residues: PhoH-like protein (349 aa).

Residue 147 to 154 coordinates ATP; it reads GPAGTGKT.

The protein belongs to the PhoH family.

Its subcellular location is the cytoplasm. The protein is PhoH-like protein of Mycobacterium leprae (strain TN).